Here is a 409-residue protein sequence, read N- to C-terminus: MEGESTSAVLSGFVLGALAFQHLNTDSDTEGFLLGEVKGEAKNSITDSQMDDVEVVYTIDIQKYIPCYQLFSFYNSSGEVNEQALKKILSNVKKNVVGWYKFRRHSDQIMTFRERLLHKNLQEHFSNQDLVFLLLTPSIITESCSTHRLEHSLYKPQKGLFHRVPLVVANLGMSEQLGYKTVSGSCMSTGFSRAVQTHSSKFFEEDGSLKEVHKINEMYASLQEELKSICKKVEDSEQAVDKLVKDVNRLKREIEKRRGAQIQAAREKNIQKDPQENIFLCQALRTFFPNSEFLHSCVMSLKNRHVSKSSCNYNHHLDVVDNLTLMVEHTDIPEASPASTPQIIKHKALDLDDRWQFKRSRLLDTQDKRSKADTGSSNQDKASKMSSPETDEEIEKMKGFGEYSRSPTF.

An MPN domain is found at S7 to L160. The residue at position 48 (S48) is a Phosphoserine. Residues D206 to A260 adopt a coiled-coil conformation. Residues L362 to A372 are compositionally biased toward basic and acidic residues. A disordered region spans residues L362–F409. Residues D373–P388 are compositionally biased toward polar residues. Residues S386 and S387 each carry the phosphoserine modification. The residue at position 390 (T390) is a Phosphothreonine. Residues S404 and S406 each carry the phosphoserine modification. The pSXXF motif signature appears at S406–F409.

This sequence belongs to the FAM175 family. Abraxas subfamily. In terms of assembly, component of the ARISC complex, at least composed of UIMC1/RAP80, ABRAXAS1, BRCC3/BRCC36, BABAM2 and BABAM1/NBA1. Component of the BRCA1-A complex, at least composed of BRCA1, BARD1, UIMC1/RAP80, ABRAXAS1, BRCC3/BRCC36, BABAM2 and BABAM1/NBA1. In the complex, interacts directly with UIMC1/RAP80, BRCC3/BRCC36 and BABAM2. Interacts directly (when phosphorylated at Ser-406) with BRCA1. Homodimer. The homodimer interacts directly (when phosphorylated at Ser-404 and Ser-406) with two BRCA1 chains, giving rise to a heterotetramer. Binds polyubiquitin. Post-translationally, phosphorylation of Ser-406 of the pSXXF motif by ATM or ATR constitutes a specific recognition motif for the BRCT domain of BRCA1. Ionizing radiation promotes rapid phosphorylation at Ser-404 and Ser-406 by ATM; this promotes recruitment of BRCA1 to sites of DNA damage.

The protein resides in the nucleus. Functionally, involved in DNA damage response and double-strand break (DSB) repair. Component of the BRCA1-A complex, acting as a central scaffold protein that assembles the various components of the complex and mediates the recruitment of BRCA1. The BRCA1-A complex specifically recognizes 'Lys-63'-linked ubiquitinated histones H2A and H2AX at DNA lesion sites, leading to target the BRCA1-BARD1 heterodimer to sites of DNA damage at DSBs. This complex also possesses deubiquitinase activity that specifically removes 'Lys-63'-linked ubiquitin on histones H2A and H2AX. This is BRCA1-A complex subunit Abraxas 1 from Homo sapiens (Human).